Here is a 792-residue protein sequence, read N- to C-terminus: Phenylalanine--tRNA ligase beta subunit (792 aa).

Positions 39–147 constitute a tRNA-binding domain; that stretch reads GEALDLIVVA…DDAPIGTPLA (109 aa). Positions 400-475 constitute a B5 domain; sequence PAPASILLRR…RIRGYEHLPT (76 aa). Mg(2+) is bound by residues Asp-453, Asp-459, Glu-462, and Glu-463. The 94-residue stretch at 698 to 791 folds into the FDX-ACB domain; that stretch reads SRFPFVRRDL…IQQRHDVRIR (94 aa).

This sequence belongs to the phenylalanyl-tRNA synthetase beta subunit family. Type 1 subfamily. Tetramer of two alpha and two beta subunits. Mg(2+) is required as a cofactor.

It is found in the cytoplasm. It carries out the reaction tRNA(Phe) + L-phenylalanine + ATP = L-phenylalanyl-tRNA(Phe) + AMP + diphosphate + H(+). The chain is Phenylalanine--tRNA ligase beta subunit (pheT) from Xylella fastidiosa (strain 9a5c).